Here is a 166-residue protein sequence, read N- to C-terminus: MSNEVKKNEELIEKLVSVKRHSKTVKGGRIMSFAALTVVGDGKGRIGVGRGKSREVPAAIQKAMENAKKNMVSVNLNNDTLWYPVMSNHGASKVFMQPASAGTGIIAGGAMRSVFEAVGVHNVLAKTYGSTNPANVVRATIAGLAKIKSPDEIAEKRGLSVEEIQG.

The S5 DRBM domain maps to 11–74 (LIEKLVSVKR…ENAKKNMVSV (64 aa)).

The protein belongs to the universal ribosomal protein uS5 family. As to quaternary structure, part of the 30S ribosomal subunit. Contacts proteins S4 and S8.

With S4 and S12 plays an important role in translational accuracy. In terms of biological role, located at the back of the 30S subunit body where it stabilizes the conformation of the head with respect to the body. This Francisella tularensis subsp. tularensis (strain FSC 198) protein is Small ribosomal subunit protein uS5.